Consider the following 105-residue polypeptide: UPF0235 protein A1G_07140 (105 aa).

This sequence belongs to the UPF0235 family.

This Rickettsia rickettsii (strain Sheila Smith) protein is UPF0235 protein A1G_07140.